The following is a 155-amino-acid chain: Large ribosomal subunit protein eL24 (155 aa).

Residues 97-129 (KPEIRKAKRDEKAKADKEKKKADKAARKADKAK) are compositionally biased toward basic and acidic residues. The disordered stretch occupies residues 97–155 (KPEIRKAKRDEKAKADKEKKKADKAARKADKAKSAATQASKISKQQAKGAFQKVAATSR). Residues 133–142 (TQASKISKQQ) are compositionally biased toward polar residues.

Belongs to the eukaryotic ribosomal protein eL24 family.

The sequence is that of Large ribosomal subunit protein eL24 (RPL24) from Eremothecium gossypii (strain ATCC 10895 / CBS 109.51 / FGSC 9923 / NRRL Y-1056) (Yeast).